The primary structure comprises 207 residues: Redox-sensing transcriptional repressor Rex (207 aa).

The segment at residues 15–54 is a DNA-binding region (H-T-H motif); that stretch reads LYYRCLNRLYEEGIEYVASKDIAERLGIKSSQVRKDLSYF. 89–94 lines the NAD(+) pocket; the sequence is GAGNIG.

The protein belongs to the transcriptional regulatory Rex family. As to quaternary structure, homodimer.

Its subcellular location is the cytoplasm. In terms of biological role, modulates transcription in response to changes in cellular NADH/NAD(+) redox state. The chain is Redox-sensing transcriptional repressor Rex from Thermosipho africanus (strain TCF52B).